Consider the following 366-residue polypeptide: UPF0329 protein ECU01_0130/ECU01_1480/ECU08_0060 (366 aa).

The interval 325–366 is disordered; the sequence is IRKEEKRIRKEEERAKNEEELLRMVESEEGKSGEGEEGCRRG.

It belongs to the UPF0329 family.

The chain is UPF0329 protein ECU01_0130/ECU01_1480/ECU08_0060 from Encephalitozoon cuniculi (strain GB-M1) (Microsporidian parasite).